The primary structure comprises 332 residues: Anthranilate phosphoribosyltransferase (332 aa).

5-phospho-alpha-D-ribose 1-diphosphate contacts are provided by residues G79, 82 to 83 (GD), S87, 89 to 92 (NIST), 107 to 115 (KHGNRSVSS), and S119. Residue G79 coordinates anthranilate. A Mg(2+)-binding site is contributed by S91. Position 110 (N110) interacts with anthranilate. R165 is an anthranilate binding site. Residues D223 and E224 each coordinate Mg(2+).

The protein belongs to the anthranilate phosphoribosyltransferase family. As to quaternary structure, homodimer. Mg(2+) is required as a cofactor.

The enzyme catalyses N-(5-phospho-beta-D-ribosyl)anthranilate + diphosphate = 5-phospho-alpha-D-ribose 1-diphosphate + anthranilate. It functions in the pathway amino-acid biosynthesis; L-tryptophan biosynthesis; L-tryptophan from chorismate: step 2/5. Its function is as follows. Catalyzes the transfer of the phosphoribosyl group of 5-phosphorylribose-1-pyrophosphate (PRPP) to anthranilate to yield N-(5'-phosphoribosyl)-anthranilate (PRA). This Yersinia pseudotuberculosis serotype O:3 (strain YPIII) protein is Anthranilate phosphoribosyltransferase.